A 194-amino-acid polypeptide reads, in one-letter code: Elongation factor P (194 aa).

This sequence belongs to the elongation factor P family.

The protein resides in the cytoplasm. It participates in protein biosynthesis; polypeptide chain elongation. In terms of biological role, involved in peptide bond synthesis. Stimulates efficient translation and peptide-bond synthesis on native or reconstituted 70S ribosomes in vitro. Probably functions indirectly by altering the affinity of the ribosome for aminoacyl-tRNA, thus increasing their reactivity as acceptors for peptidyl transferase. This chain is Elongation factor P, found in Hydrogenobaculum sp. (strain Y04AAS1).